A 192-amino-acid chain; its full sequence is NADH-ubiquinone oxidoreductase subunit 9 (192 aa).

The protein belongs to the complex I 30 kDa subunit family. Complex I is composed of about 30 different subunits.

The protein localises to the mitochondrion inner membrane. It carries out the reaction a ubiquinone + NADH + 5 H(+)(in) = a ubiquinol + NAD(+) + 4 H(+)(out). Functionally, core subunit of the mitochondrial membrane respiratory chain NADH dehydrogenase (Complex I) that is believed to belong to the minimal assembly required for catalysis. Complex I functions in the transfer of electrons from NADH to the respiratory chain. The immediate electron acceptor for the enzyme is believed to be ubiquinone. The protein is NADH-ubiquinone oxidoreductase subunit 9 (NAD9) of Prototheca wickerhamii.